The chain runs to 186 residues: NADH dehydrogenase [ubiquinone] 1 beta subcomplex subunit 8, mitochondrial (186 aa).

A mitochondrion-targeting transit peptide spans 1-28 (MAVARAGVLGVQWLQRASRNVMPLGART). A helical transmembrane segment spans residues 133 to 153 (LFGFLAFMIFMCWVGDVYPVY).

It belongs to the complex I NDUFB8 subunit family. As to quaternary structure, complex I is composed of 45 different subunits.

It is found in the mitochondrion inner membrane. Functionally, accessory subunit of the mitochondrial membrane respiratory chain NADH dehydrogenase (Complex I), that is believed not to be involved in catalysis. Complex I functions in the transfer of electrons from NADH to the respiratory chain. The immediate electron acceptor for the enzyme is believed to be ubiquinone. The chain is NADH dehydrogenase [ubiquinone] 1 beta subcomplex subunit 8, mitochondrial (NDUFB8) from Homo sapiens (Human).